Here is a 643-residue protein sequence, read N- to C-terminus: E3 ubiquitin-protein ligase AMFR (643 aa).

A run of 6 helical transmembrane segments spans residues 82–102 (LFVW…AKLI), 122–142 (FWNF…VQTV), 186–206 (VLSL…VCCV), 215–235 (TLAF…HVIL), 254–274 (GTYV…LDLM), and 276–296 (HIHM…VIFM). The RING-type zinc-finger motif lies at 341–379 (CAICWDSMQAARKLPCGHLFHNSCLRSWLEQDTSCPTCR). The helical transmembrane segment at 429–449 (IASWLPSFSVEVMHTTNILGI) threads the bilayer. In terms of domain architecture, CUE spans 456–498 (QLNAMAHQIQEMFPQVPYHLVLQDLQMTRSVEITTDNILEGRI). A disordered region spans residues 504–535 (TQRSDSLRPALNSPVERPSPDLEEGEASVQTE). Phosphoserine occurs at positions 516 and 542. The tract at residues 598–624 (LNKSSEDDGASERLLPSEGTSSDPVTL) is disordered. The VCP/p97-interacting motif (VIM) stretch occupies residues 622-640 (VTLRRRMLAAAAERRLQRQ).

Interacts with RNF5. Also forms an ERAD complex containing VCP/p97, NGLY1; PSMC1; SAKS1 and RAD23B required for coupling retrotranslocation, ubiquitination and deglycosylation. Interacts with DERL1. Interacts (through a region distinct from the RING finger) with UBE2G2/UBC7. Component of the VCP/p97-AMFR/gp78 complex that enhances VCP/p97 binding to polyubiquitinated proteins for their degradation by the endoplasmic reticulum-associated degradation (ERAD) pathway. Interacts (via the VIM) with VCP/p97. Interacts (via its membrane domain) with INSIG1; the interaction initiates the sterol-mediated ubiquitination and degradation of HMGCR by the ERAD pathway. Interacts with AUP1, UBE2G2 and RNF139/TRC8; interaction with AUP1 facilitates interaction of AMFR with ubiquitin-conjugating enzyme UBE2G2 and ubiquitin ligase RNF139, leading to sterol-induced ubiquitination of HNGCR and its subsequent proteasomal degradation. Interacts with BAG6. Interacts with USP13 (via UBA 2 domain); the interaction is direct. Interacts with LMBR1L, UBAC2 and CTNNB1. Interacts with C18orf32. In terms of processing, palmitoylation of the RING-type zing finger by ZDHHC6 promotes localization to the peripheral endoplasmic reticulum. Expressed in heart, brain, liver, lung, skeletal muscle, kidney and testis. Not detected in spleen.

The protein localises to the endoplasmic reticulum membrane. It carries out the reaction [E2 ubiquitin-conjugating enzyme]-S-ubiquitinyl-L-cysteine + [acceptor protein]-L-cysteine = [E2 ubiquitin-conjugating enzyme]-L-cysteine + [acceptor protein]-S-ubiquitinyl-L-cysteine.. It participates in protein modification; protein ubiquitination. Its function is as follows. E3 ubiquitin-protein ligase that mediates the polyubiquitination of lysine and cysteine residues on target proteins, such as CD3D, CYP3A4, CFTR, INSIG1, SOAT2/ACAT2 and APOB for proteasomal degradation. Component of a VCP/p97-AMFR/gp78 complex that participates in the final step of endoplasmic reticulum-associated degradation (ERAD). The VCP/p97-AMFR/gp78 complex is involved in the sterol-accelerated ERAD degradation of HMGCR through binding to the HMGCR-INSIG1 complex at the ER membrane. In addition, interaction of AMFR with AUP1 facilitates interaction of AMFR with ubiquitin-conjugating enzyme UBE2G2 and ubiquitin ligase RNF139, leading to sterol-induced HMGCR ubiquitination. The ubiquitinated HMGCR is then released from the ER by the complex into the cytosol for subsequent destruction. In addition to ubiquitination on lysine residues, catalyzes ubiquitination on cysteine residues: together with INSIG1, mediates polyubiquitination of SOAT2/ACAT2 at 'Cys-277', leading to its degradation when the lipid levels are low. Catalyzes ubiquitination and subsequent degradation of INSIG1 when cells are depleted of sterols. Mediates polyubiquitination of INSIG2 at 'Cys-215' in some tissues, leading to its degradation. Also regulates ERAD through the ubiquitination of UBL4A a component of the BAG6/BAT3 complex. Also acts as a scaffold protein to assemble a complex that couples ubiquitination, retranslocation and deglycosylation. Mediates tumor invasion and metastasis as a receptor for the GPI/autocrine motility factor. In association with LMBR1L and UBAC2, negatively regulates the canonical Wnt signaling pathway in the lymphocytes by promoting the ubiquitin-mediated degradation of CTNNB1 and Wnt receptors FZD6 and LRP6. Regulates NF-kappa-B and MAPK signaling pathways by mediating 'Lys-27'-linked polyubiquitination of TAB3 and promoting subsequent TAK1/MAP3K7 activation. The sequence is that of E3 ubiquitin-protein ligase AMFR (Amfr) from Mus musculus (Mouse).